The primary structure comprises 104 residues: L-rhamnose mutarotase (104 aa).

Tyr-18 is a substrate binding site. His-22 functions as the Proton donor in the catalytic mechanism. Substrate-binding positions include Tyr-41 and Trp-76–Trp-77.

The protein belongs to the rhamnose mutarotase family. Homodimer.

It localises to the cytoplasm. The catalysed reaction is alpha-L-rhamnose = beta-L-rhamnose. The protein operates within carbohydrate metabolism; L-rhamnose metabolism. In terms of biological role, involved in the anomeric conversion of L-rhamnose. This is L-rhamnose mutarotase from Shouchella clausii (strain KSM-K16) (Alkalihalobacillus clausii).